The chain runs to 768 residues: Phosphoribosylformylglycinamidine synthase subunit PurL (768 aa).

Residue H48 is part of the active site. 2 residues coordinate ATP: Y51 and K90. Position 92 (E92) interacts with Mg(2+). Substrate-binding positions include 93–96 and R115; that span reads SHNH. H94 serves as the catalytic Proton acceptor. Residue D116 coordinates Mg(2+). Substrate is bound at residue Q239. Mg(2+) is bound at residue D267. 311–313 contributes to the substrate binding site; the sequence is ESQ. ATP-binding residues include D507 and G544. N545 contacts Mg(2+). Residue S547 participates in substrate binding.

Belongs to the FGAMS family. Monomer. Part of the FGAM synthase complex composed of 1 PurL, 1 PurQ and 2 PurS subunits.

It localises to the cytoplasm. The catalysed reaction is N(2)-formyl-N(1)-(5-phospho-beta-D-ribosyl)glycinamide + L-glutamine + ATP + H2O = 2-formamido-N(1)-(5-O-phospho-beta-D-ribosyl)acetamidine + L-glutamate + ADP + phosphate + H(+). The protein operates within purine metabolism; IMP biosynthesis via de novo pathway; 5-amino-1-(5-phospho-D-ribosyl)imidazole from N(2)-formyl-N(1)-(5-phospho-D-ribosyl)glycinamide: step 1/2. Its function is as follows. Part of the phosphoribosylformylglycinamidine synthase complex involved in the purines biosynthetic pathway. Catalyzes the ATP-dependent conversion of formylglycinamide ribonucleotide (FGAR) and glutamine to yield formylglycinamidine ribonucleotide (FGAM) and glutamate. The FGAM synthase complex is composed of three subunits. PurQ produces an ammonia molecule by converting glutamine to glutamate. PurL transfers the ammonia molecule to FGAR to form FGAM in an ATP-dependent manner. PurS interacts with PurQ and PurL and is thought to assist in the transfer of the ammonia molecule from PurQ to PurL. This chain is Phosphoribosylformylglycinamidine synthase subunit PurL, found in Parasynechococcus marenigrum (strain WH8102).